Reading from the N-terminus, the 158-residue chain is Transcription factor BTF3 homolog 4 (158 aa).

N6-methyllysine is present on Lys5. The NAC-A/B domain maps to 33–98; it reads TADDKKLQSS…AEAKPITEML (66 aa). A Phosphothreonine modification is found at Thr111. The interval 122–158 is disordered; sequence RQVLDSKAPKPEDIDEEDDDVPDLVENFDEASKNEAN. The span at 134–150 shows a compositional bias: acidic residues; that stretch reads DIDEEDDDVPDLVENFD.

The protein belongs to the NAC-beta family.

In Homo sapiens (Human), this protein is Transcription factor BTF3 homolog 4 (BTF3L4).